A 217-amino-acid chain; its full sequence is ATP-dependent Clp protease proteolytic subunit 2 (217 aa).

S113 (nucleophile) is an active-site residue. Residue H138 is part of the active site.

The protein belongs to the peptidase S14 family. Fourteen ClpP subunits assemble into 2 heptameric rings which stack back to back to give a disk-like structure with a central cavity, resembling the structure of eukaryotic proteasomes.

Its subcellular location is the cytoplasm. It carries out the reaction Hydrolysis of proteins to small peptides in the presence of ATP and magnesium. alpha-casein is the usual test substrate. In the absence of ATP, only oligopeptides shorter than five residues are hydrolyzed (such as succinyl-Leu-Tyr-|-NHMec, and Leu-Tyr-Leu-|-Tyr-Trp, in which cleavage of the -Tyr-|-Leu- and -Tyr-|-Trp bonds also occurs).. Cleaves peptides in various proteins in a process that requires ATP hydrolysis. Has a chymotrypsin-like activity. Plays a major role in the degradation of misfolded proteins. This is ATP-dependent Clp protease proteolytic subunit 2 from Frankia casuarinae (strain DSM 45818 / CECT 9043 / HFP020203 / CcI3).